Reading from the N-terminus, the 218-residue chain is Variable small protein 8 (218 aa).

The first 18 residues, 1 to 18 (MRKRISAIIMTLFMVFMS), serve as a signal peptide directing secretion. Cys-19 carries N-palmitoyl cysteine lipidation. Cys-19 is lipidated: S-diacylglycerol cysteine.

The protein belongs to the variable small protein (Vsp) family.

The protein resides in the cell outer membrane. Functionally, the Vlp and Vsp proteins are antigenically distinct proteins, only one vlp or vsp gene is transcriptionally active at any one time. Switching between these genes is a mechanism of host immune response evasion. This chain is Variable small protein 8, found in Borrelia hermsii.